The sequence spans 791 residues: Cellobionic acid phosphorylase (791 aa).

The active-site Proton donor is the Asp478.

This sequence belongs to the glycosyl hydrolase 94 family. Cellobionic acid phosphorylase subfamily. As to quaternary structure, homodimer.

The catalysed reaction is 4-O-beta-D-glucopyranosyl-D-gluconate + phosphate = D-gluconate + alpha-D-glucose 1-phosphate. It participates in glycan metabolism; cellulose degradation. Catalyzes the reversible phosphorolysis of cellobionic acid (4-O-beta-D-glucopyranosyl-D-gluconate), a probable step in cellulose degradation. May be part of a metabolic pathway where cellobionic acid is converted into alpha-D-glucose 1-phosphate and D-gluconic acid to enter glycolysis and the pentose phosphate pathway, respectively. Produces 4-O-beta-D-glucopyranosyl-D-glucuronate from alpha-D-glucose 1-phosphate and D-glucuronate with low activity in the synthetic direction. The chain is Cellobionic acid phosphorylase from Neurospora crassa (strain ATCC 24698 / 74-OR23-1A / CBS 708.71 / DSM 1257 / FGSC 987).